Consider the following 393-residue polypeptide: Dual-specificity RNA methyltransferase RlmN (393 aa).

The disordered stretch occupies residues 1–22 (MSEQLLSELSPVAATSPSPAPA). The segment covering 10-22 (SPVAATSPSPAPA) has biased composition (low complexity). The active-site Proton acceptor is E114. The Radical SAM core domain maps to 120–358 (EDDRATLCVS…TTIVRKTRGD (239 aa)). The cysteines at positions 127 and 364 are disulfide-linked. [4Fe-4S] cluster contacts are provided by C134, C138, and C141. Residues 188-189 (GE), S220, 242-244 (SLH), and N321 each bind S-adenosyl-L-methionine. Residue C364 is the S-methylcysteine intermediate of the active site.

Belongs to the radical SAM superfamily. RlmN family. It depends on [4Fe-4S] cluster as a cofactor.

It localises to the cytoplasm. The catalysed reaction is adenosine(2503) in 23S rRNA + 2 reduced [2Fe-2S]-[ferredoxin] + 2 S-adenosyl-L-methionine = 2-methyladenosine(2503) in 23S rRNA + 5'-deoxyadenosine + L-methionine + 2 oxidized [2Fe-2S]-[ferredoxin] + S-adenosyl-L-homocysteine. It catalyses the reaction adenosine(37) in tRNA + 2 reduced [2Fe-2S]-[ferredoxin] + 2 S-adenosyl-L-methionine = 2-methyladenosine(37) in tRNA + 5'-deoxyadenosine + L-methionine + 2 oxidized [2Fe-2S]-[ferredoxin] + S-adenosyl-L-homocysteine. Functionally, specifically methylates position 2 of adenine 2503 in 23S rRNA and position 2 of adenine 37 in tRNAs. m2A2503 modification seems to play a crucial role in the proofreading step occurring at the peptidyl transferase center and thus would serve to optimize ribosomal fidelity. The sequence is that of Dual-specificity RNA methyltransferase RlmN from Sodalis glossinidius (strain morsitans).